A 274-amino-acid chain; its full sequence is Glutamate racemase (274 aa).

Substrate is bound by residues 9-10 (DS) and 41-42 (YG). Cysteine 73 serves as the catalytic Proton donor/acceptor. Substrate is bound at residue 74–75 (NT). The active-site Proton donor/acceptor is the cysteine 183. 184 to 185 (TH) lines the substrate pocket.

Belongs to the aspartate/glutamate racemases family.

It carries out the reaction L-glutamate = D-glutamate. Its pathway is cell wall biogenesis; peptidoglycan biosynthesis. Its function is as follows. Provides the (R)-glutamate required for cell wall biosynthesis. The protein is Glutamate racemase of Shewanella baltica (strain OS223).